The chain runs to 164 residues: Crossover junction endodeoxyribonuclease RuvC (164 aa).

Residues aspartate 7, glutamate 67, and aspartate 139 contribute to the active site. Residues aspartate 7, glutamate 67, and aspartate 139 each contribute to the Mg(2+) site.

It belongs to the RuvC family. Homodimer which binds Holliday junction (HJ) DNA. The HJ becomes 2-fold symmetrical on binding to RuvC with unstacked arms; it has a different conformation from HJ DNA in complex with RuvA. In the full resolvosome a probable DNA-RuvA(4)-RuvB(12)-RuvC(2) complex forms which resolves the HJ. It depends on Mg(2+) as a cofactor.

Its subcellular location is the cytoplasm. It catalyses the reaction Endonucleolytic cleavage at a junction such as a reciprocal single-stranded crossover between two homologous DNA duplexes (Holliday junction).. Its function is as follows. The RuvA-RuvB-RuvC complex processes Holliday junction (HJ) DNA during genetic recombination and DNA repair. Endonuclease that resolves HJ intermediates. Cleaves cruciform DNA by making single-stranded nicks across the HJ at symmetrical positions within the homologous arms, yielding a 5'-phosphate and a 3'-hydroxyl group; requires a central core of homology in the junction. The consensus cleavage sequence is 5'-(A/T)TT(C/G)-3'. Cleavage occurs on the 3'-side of the TT dinucleotide at the point of strand exchange. HJ branch migration catalyzed by RuvA-RuvB allows RuvC to scan DNA until it finds its consensus sequence, where it cleaves and resolves the cruciform DNA. The chain is Crossover junction endodeoxyribonuclease RuvC from Citrifermentans bemidjiense (strain ATCC BAA-1014 / DSM 16622 / JCM 12645 / Bem) (Geobacter bemidjiensis).